A 1475-amino-acid chain; its full sequence is ABC transporter G family member 15 (1475 aa).

The segment covering 1-10 has biased composition (basic and acidic residues); the sequence is MDSNENKKNG. Disordered regions lie at residues 1–40 and 75–94; these read MDSN…EEHI and NIKN…GGGA. Residues 17-34 show a composition bias toward low complexity; that stretch reads NIINNNNDNNNNNDNNNN. The stretch at 25-67 forms a coiled coil; it reads NNNNNDNNNNSTEEHIESVEQSIKEFNNVANELETEFRDYLVE. The 250-residue stretch at 155–404 folds into the ABC transporter 1 domain; that stretch reads LNVKNWFKKS…FIDMGFECEP (250 aa). The ABC transmembrane type-2 1 domain maps to 507 to 753; it reads WGDKFSLISR…FTGERYLEKS (247 aa). 5 helical membrane-spanning segments follow: residues 596–616, 623–641, 653–673, 680–699, and 770–790; these read IPII…MFGL, FFIN…NNLY, IGQN…SYII, VWFG…RALM, and ICIV…VLNI. The ABC transporter 2 domain maps to 842-1087; the sequence is FTWQHMYYSV…LTSYFQRHGV (246 aa). 879 to 886 contacts ATP; sequence GSSGAGKT. The next 6 helical transmembrane spans lie at 1180-1200, 1216-1236, 1256-1276, 1293-1313, 1323-1343, and 1449-1469; these read GYSY…GWTF, FIFN…PQFI, FALS…TIFF, FFFW…GQAI, ALNL…VLVI, and FGII…FVFL. The 225-residue stretch at 1180–1404 folds into the ABC transmembrane type-2 2 domain; that stretch reads GYSYGTFIQS…TCSDYAFEFL (225 aa).

Belongs to the ABC transporter superfamily. ABCG family. PDR (TC 3.A.1.205) subfamily.

The protein localises to the membrane. This is ABC transporter G family member 15 (abcG15) from Dictyostelium discoideum (Social amoeba).